The chain runs to 668 residues: RING finger protein 214 (668 aa).

Disordered regions lie at residues 1–87 (MAAS…AHEE) and 103–125 (NGSQSDLKDLTNPAGEEGDTSLR). An N-acetylalanine modification is found at A2. 4 positions are modified to phosphoserine: S15, S40, S48, and S54. Positions 43-59 (KQKNLSPPSVSSQMITK) are enriched in polar residues. Over residues 60-71 (ESNRNAHLEHPE) the composition is skewed to basic and acidic residues. S196 is modified (phosphoserine). The stretch at 220–379 (QDIEKNLDKM…AEKEAELHLT (160 aa)) forms a coiled coil. The tract at residues 486-552 (FPILNPALSQ…SSETPRPQPV (67 aa)) is disordered. 3 positions are modified to phosphoserine: S497, S511, and S516. Over residues 523 to 536 (PHMPPAASIPPPPG) the composition is skewed to pro residues. An RING-type; atypical zinc finger spans residues 623-665 (CLMCQKLVQPSELHPMACTHALHKECIKFWAQTNTNDTCPFCP).

In Mus musculus (Mouse), this protein is RING finger protein 214 (Rnf214).